The following is a 270-amino-acid chain: Thymidine kinase 2, mitochondrial (270 aa).

The N-terminal 38 residues, 1–38 (MLLRSLRSWAARSPRSVGPGSSGSPGSLDSGAGPLWAP), are a transit peptide targeting the mitochondrion. Positions 1 to 54 (MLLRSLRSWAARSPRSVGPGSSGSPGSLDSGAGPLWAPRRAWPPDKDRENDKEK) are disordered. Low complexity predominate over residues 13 to 34 (SPRSVGPGSSGSPGSLDSGAGP). Positions 42–54 (WPPDKDRENDKEK) are enriched in basic and acidic residues. 62–70 (GNIASGKTT) provides a ligand contact to ATP. The active-site Proton acceptor is the Glu138.

The protein belongs to the DCK/DGK family. In terms of assembly, homodimer. Found in most tissues; highly expressed in liver.

It is found in the mitochondrion. The enzyme catalyses thymidine + ATP = dTMP + ADP + H(+). The catalysed reaction is 2'-deoxycytidine + ATP = dCMP + ADP + H(+). It catalyses the reaction 2'-deoxyuridine + ATP = dUMP + ADP + H(+). Its function is as follows. Phosphorylates thymidine, deoxycytidine, and deoxyuridine in the mitochondrial matrix. In non-replicating cells, where cytosolic dNTP synthesis is down-regulated, mtDNA synthesis depends solely on TK2 and DGUOK. The sequence is that of Thymidine kinase 2, mitochondrial (Tk2) from Mus musculus (Mouse).